A 266-amino-acid polypeptide reads, in one-letter code: Small ribosomal subunit protein mS42 (266 aa).

Belongs to the mitochondrion-specific ribosomal protein mS42 family. Component of the mitochondrial small ribosomal subunit (mt-SSU). Mature yeast 74S mitochondrial ribosomes consist of a small (37S) and a large (54S) subunit. The 37S small subunit contains a 15S ribosomal RNA (15S mt-rRNA) and 34 different proteins. The 54S large subunit contains a 21S rRNA (21S mt-rRNA) and 46 different proteins. mS42 forms a heterodimer with mS43, building a large protuberance adjacent to the mRNA channel exit in the mt-SSU body.

The protein resides in the mitochondrion. Functionally, component of the mitochondrial ribosome (mitoribosome), a dedicated translation machinery responsible for the synthesis of mitochondrial genome-encoded proteins, including at least some of the essential transmembrane subunits of the mitochondrial respiratory chain. The mitoribosomes are attached to the mitochondrial inner membrane and translation products are cotranslationally integrated into the membrane. The polypeptide is Small ribosomal subunit protein mS42 (RSM26) (Saccharomyces cerevisiae (strain ATCC 204508 / S288c) (Baker's yeast)).